Reading from the N-terminus, the 188-residue chain is GMP synthase [glutamine-hydrolyzing] subunit A (188 aa).

The Glutamine amidotransferase type-1 domain maps to 2–188 (KVAVIYFGGQ…FKNFIKICRK (187 aa)). The active-site Nucleophile is the cysteine 79. Residues histidine 166 and glutamate 168 contribute to the active site.

Heterodimer composed of a glutamine amidotransferase subunit (A) and a GMP-binding subunit (B).

It carries out the reaction XMP + L-glutamine + ATP + H2O = GMP + L-glutamate + AMP + diphosphate + 2 H(+). Its pathway is purine metabolism; GMP biosynthesis; GMP from XMP (L-Gln route): step 1/1. In terms of biological role, catalyzes the synthesis of GMP from XMP. This is GMP synthase [glutamine-hydrolyzing] subunit A from Sulfolobus acidocaldarius (strain ATCC 33909 / DSM 639 / JCM 8929 / NBRC 15157 / NCIMB 11770).